We begin with the raw amino-acid sequence, 240 residues long: Serine protease SplB (240 aa).

Residues 1 to 36 (MNKNVVIKSLAALTILTSVTGIGTTLVEEVQQTAKA) form the signal peptide. Active-site charge relay system residues include His-75, Asp-113, and Ser-193.

The protein belongs to the peptidase S1B family.

It is found in the secreted. Serine protease that cleaves specifically after the sequence Trp-Glu-Leu-Gln. This Staphylococcus aureus (strain USA300) protein is Serine protease SplB (splB).